We begin with the raw amino-acid sequence, 344 residues long: NAD-dependent alcohol dehydrogenase (344 aa).

Cys-38, His-66, Asp-96, Cys-99, Cys-102, Cys-110, and Cys-152 together coordinate Zn(2+).

Belongs to the zinc-containing alcohol dehydrogenase family. As to quaternary structure, homodimer and homotetramer. The cofactor is Zn(2+).

The catalysed reaction is a primary alcohol + NAD(+) = an aldehyde + NADH + H(+). It catalyses the reaction a secondary alcohol + NAD(+) = a ketone + NADH + H(+). The sequence is that of NAD-dependent alcohol dehydrogenase (adh) from Sulfolobus acidocaldarius (strain ATCC 33909 / DSM 639 / JCM 8929 / NBRC 15157 / NCIMB 11770).